Reading from the N-terminus, the 114-residue chain is N(4)-acetylcytidine amidohydrolase (114 aa).

Residues 8 to 93 form the ASCH domain; sequence TFFEFLTPLV…ALIQEIYPNI (86 aa). The active-site Proton acceptor is the lysine 22. Threonine 25 acts as the Nucleophile in catalysis. The Proton donor role is filled by glutamate 75.

This sequence belongs to the N(4)-acetylcytidine amidohydrolase family.

The enzyme catalyses N(4)-acetylcytidine + H2O = cytidine + acetate + H(+). It carries out the reaction N(4)-acetyl-2'-deoxycytidine + H2O = 2'-deoxycytidine + acetate + H(+). It catalyses the reaction N(4)-acetylcytosine + H2O = cytosine + acetate + H(+). Catalyzes the hydrolysis of N(4)-acetylcytidine (ac4C). This Vibrio cholerae serotype O1 (strain ATCC 39541 / Classical Ogawa 395 / O395) protein is N(4)-acetylcytidine amidohydrolase.